The primary structure comprises 121 residues: Large ribosomal subunit protein bL12 (121 aa).

The protein belongs to the bacterial ribosomal protein bL12 family. In terms of assembly, homodimer. Part of the ribosomal stalk of the 50S ribosomal subunit. Forms a multimeric L10(L12)X complex, where L10 forms an elongated spine to which 2 to 4 L12 dimers bind in a sequential fashion. Binds GTP-bound translation factors.

Forms part of the ribosomal stalk which helps the ribosome interact with GTP-bound translation factors. Is thus essential for accurate translation. This is Large ribosomal subunit protein bL12 from Streptococcus pyogenes serotype M3 (strain ATCC BAA-595 / MGAS315).